The following is a 419-amino-acid chain: D-amino acid dehydrogenase (419 aa).

3–17 (VLILGSGVVGVTSAY) contributes to the FAD binding site.

The protein belongs to the DadA oxidoreductase family. It depends on FAD as a cofactor.

It catalyses the reaction a D-alpha-amino acid + A + H2O = a 2-oxocarboxylate + AH2 + NH4(+). The protein operates within amino-acid degradation; D-alanine degradation; NH(3) and pyruvate from D-alanine: step 1/1. Its function is as follows. Oxidative deamination of D-amino acids. The polypeptide is D-amino acid dehydrogenase (Chromohalobacter salexigens (strain ATCC BAA-138 / DSM 3043 / CIP 106854 / NCIMB 13768 / 1H11)).